A 655-amino-acid polypeptide reads, in one-letter code: UvrABC system protein C (655 aa).

A GIY-YIG domain is found at 16-95 (TDPGVYRFRD…IKEFAPRYNL (80 aa)). The UVR domain maps to 207–242 (KRFIGTLEKQMAEAVAELDYERAARLRDDVIALRKV).

Belongs to the UvrC family. In terms of assembly, interacts with UvrB in an incision complex.

The protein localises to the cytoplasm. Its function is as follows. The UvrABC repair system catalyzes the recognition and processing of DNA lesions. UvrC both incises the 5' and 3' sides of the lesion. The N-terminal half is responsible for the 3' incision and the C-terminal half is responsible for the 5' incision. The polypeptide is UvrABC system protein C (Renibacterium salmoninarum (strain ATCC 33209 / DSM 20767 / JCM 11484 / NBRC 15589 / NCIMB 2235)).